A 327-amino-acid polypeptide reads, in one-letter code: Carboxylesterase 20 (327 aa).

Positions 87–89 match the Involved in the stabilization of the negatively charged intermediate by the formation of the oxyanion hole motif; sequence HGG. Ser-166 (nucleophile) is an active-site residue. Active-site residues include Asp-272 and His-302.

Belongs to the 'GDXG' lipolytic enzyme family. As to expression, expressed in roots, stems, flowers and siliques.

It catalyses the reaction a carboxylic ester + H2O = an alcohol + a carboxylate + H(+). Esterase activity measured in vitro with the synthetic substrate p-nitrophenyl acetate (pNPA) is inhibited by strigolactone. In terms of biological role, carboxylesterase that possesses esterase activity in vitro with the synthetic substrate p-nitrophenyl acetate (pNPA). Binds strigolactones, but is not able to hydrolyze them. May be involved in the regulation of shoot branching. In Arabidopsis thaliana (Mouse-ear cress), this protein is Carboxylesterase 20.